Consider the following 311-residue polypeptide: Formimidoylglutamase (311 aa).

Residues histidine 122, aspartate 151, histidine 153, aspartate 155, cysteine 242, and aspartate 244 each contribute to the Mn(2+) site.

It belongs to the arginase family. As to quaternary structure, homodimer. The cofactor is Mn(2+).

It catalyses the reaction N-formimidoyl-L-glutamate + H2O = formamide + L-glutamate. The protein operates within amino-acid degradation; L-histidine degradation into L-glutamate; L-glutamate from N-formimidoyl-L-glutamate (hydrolase route): step 1/1. In terms of biological role, catalyzes the conversion of N-formimidoyl-L-glutamate to L-glutamate and formamide. The sequence is that of Formimidoylglutamase from Pseudomonas aeruginosa (strain ATCC 15692 / DSM 22644 / CIP 104116 / JCM 14847 / LMG 12228 / 1C / PRS 101 / PAO1).